The sequence spans 271 residues: MLSIQQPLLVFSDLDGTLLDSHSYDWQPAAPWLSRLREANVPVILCSSKTSAEMLYLQKMLGLQGLPLIAENGAVIQLAEQWQDIDGFPRIISGISHGEISQVLNTLREKEHFKFTTFDDVDDATIAEWTGLSRSQAALTQLHEASVTLIWRDSDERMAQFTTRLHELGLQFMQGARFWHVLDASAGKDQAANWIIATYQQLSGKRPTTLGLGDGPNDAPLLEVMDYAVIVKGLNREGVHLHDEDPARVWRTQREGPEGWREGLDHFFSAH.

Catalysis depends on D13, which acts as the Nucleophile. Mg(2+) is bound by residues D13, D15, and D214.

This sequence belongs to the HAD-like hydrolase superfamily. MPGP family. Mg(2+) serves as cofactor.

The protein localises to the cytoplasm. The enzyme catalyses 2-O-(alpha-D-mannosyl)-3-phosphoglycerate + H2O = (2R)-2-O-(alpha-D-mannosyl)-glycerate + phosphate. In Escherichia coli O17:K52:H18 (strain UMN026 / ExPEC), this protein is Mannosyl-3-phosphoglycerate phosphatase.